The following is a 131-amino-acid chain: uncharacterized protein (131 aa).

The first 19 residues, 1 to 19 (MRESLFIIFFQFVCHSSNS), serve as a signal peptide directing secretion. A run of 2 helical transmembrane segments spans residues 33-53 (PLLTWTAPSIDLALSILALFF) and 111-131 (VSFNGDLIIIFVGETIFFFLF).

The protein resides in the membrane. This is an uncharacterized protein from Saccharomyces cerevisiae (strain ATCC 204508 / S288c) (Baker's yeast).